We begin with the raw amino-acid sequence, 340 residues long: Phosphoribosylformylglycinamidine cyclo-ligase (340 aa).

It belongs to the AIR synthase family.

The protein resides in the cytoplasm. The catalysed reaction is 2-formamido-N(1)-(5-O-phospho-beta-D-ribosyl)acetamidine + ATP = 5-amino-1-(5-phospho-beta-D-ribosyl)imidazole + ADP + phosphate + H(+). It participates in purine metabolism; IMP biosynthesis via de novo pathway; 5-amino-1-(5-phospho-D-ribosyl)imidazole from N(2)-formyl-N(1)-(5-phospho-D-ribosyl)glycinamide: step 2/2. This Streptococcus pyogenes serotype M1 protein is Phosphoribosylformylglycinamidine cyclo-ligase.